Reading from the N-terminus, the 242-residue chain is Caspase-14 (242 aa).

Residues 1 to 5 constitute a propeptide that is removed on maturation; the sequence is MSNPR. Active-site residues include H89 and C132. A propeptide spanning residues 147 to 152 is cleaved from the precursor; sequence EIVMVI.

This sequence belongs to the peptidase C14A family. Heterodimer of a large and a small subunit, both processed from the precursor; the mature active form is a p17/p10 dimer and the intermediate form a p20/p8 dimer. Post-translationally, maturation by proteolytic processing appears to be a two-step process. The precursor is processed by KLK7 to yield the p20/p8 intermediate form which acts on the precursor to yield the p17/p10 mature form. Initially, cleavage between Ile-152 and Lys-153 has been proposed to yield the large and small subunits of the active enzyme. Expressed in keratinocytes of adult skin suprabasal layers (from spinous layers to the stratum granulosum and stratum corneum) (at protein level). Expressed in keratinocytes of hair shaft and sebaceous glands (at protein level). In psoriatic skin only expressed at very low levels. The p17/10 mature form is expressed in epidermis stratum corneum, the p20/p8 intermediate form in epidermis upper granular cells of the stratum granulosum.

It is found in the cytoplasm. Its subcellular location is the nucleus. With respect to regulation, inhibited by caspase-1 inhibitor YVAD-FMK and the pan-caspase inhibitor VAD-FMK. In terms of biological role, non-apoptotic caspase involved in epidermal differentiation. Is the predominant caspase in epidermal stratum corneum. Seems to play a role in keratinocyte differentiation and is required for cornification. Regulates maturation of the epidermis by proteolytically processing filaggrin. In vitro has a preference for the substrate [WY]-X-X-D motif and is active on the synthetic caspase substrate WEHD-ACF. Involved in processing of prosaposin in the epidermis. May be involved in retinal pigment epithelium cell barrier function. Involved in DNA degradation in differentiated keratinocytes probably by cleaving DFFA/ICAD leading to liberation of DFFB/CAD. The chain is Caspase-14 (CASP14) from Homo sapiens (Human).